A 392-amino-acid chain; its full sequence is ESX-1 secretion-associated protein EspA (392 aa).

Positions 302–392 are disordered; that stretch reads TRQALRPRAD…GQKVLVRNVV (91 aa). Gly residues predominate over residues 334 to 344; that stretch reads QGMGGPVGMGG.

In terms of assembly, homodimer; disulfide-linked.

It localises to the secreted. In terms of biological role, required for secretion of EsxA (ESAT-6) and EsxB (CFP-10) and for virulence. The sequence is that of ESX-1 secretion-associated protein EspA from Mycobacterium tuberculosis (strain CDC 1551 / Oshkosh).